We begin with the raw amino-acid sequence, 492 residues long: Aspartyl/glutamyl-tRNA(Asn/Gln) amidotransferase subunit B (492 aa).

This sequence belongs to the GatB/GatE family. GatB subfamily. In terms of assembly, heterotrimer of A, B and C subunits.

It carries out the reaction L-glutamyl-tRNA(Gln) + L-glutamine + ATP + H2O = L-glutaminyl-tRNA(Gln) + L-glutamate + ADP + phosphate + H(+). It catalyses the reaction L-aspartyl-tRNA(Asn) + L-glutamine + ATP + H2O = L-asparaginyl-tRNA(Asn) + L-glutamate + ADP + phosphate + 2 H(+). Functionally, allows the formation of correctly charged Asn-tRNA(Asn) or Gln-tRNA(Gln) through the transamidation of misacylated Asp-tRNA(Asn) or Glu-tRNA(Gln) in organisms which lack either or both of asparaginyl-tRNA or glutaminyl-tRNA synthetases. The reaction takes place in the presence of glutamine and ATP through an activated phospho-Asp-tRNA(Asn) or phospho-Glu-tRNA(Gln). The polypeptide is Aspartyl/glutamyl-tRNA(Asn/Gln) amidotransferase subunit B (Pelagibacter ubique (strain HTCC1062)).